A 179-amino-acid chain; its full sequence is MLKIKSTTVIAVMHNNEVAIGADGQATMGSTVVKGNVNKIRKLLDGKVLTGFAGSTADAFTLLDRFDEKLQRYFGHMKRSAIELAKDWRTDRYLRRLEAMLIAVNKEELLLISGTGDVIEPDNGIVTIGSGSLYAESAAIALKKHAPHLTAEEIVRESLTIAADICIYTNDNLTIEKIS.

Thr7 is a catalytic residue. Positions 163, 166, and 169 each coordinate Na(+).

The protein belongs to the peptidase T1B family. HslV subfamily. In terms of assembly, a double ring-shaped homohexamer of HslV is capped on each side by a ring-shaped HslU homohexamer. The assembly of the HslU/HslV complex is dependent on binding of ATP.

It is found in the cytoplasm. The enzyme catalyses ATP-dependent cleavage of peptide bonds with broad specificity.. With respect to regulation, allosterically activated by HslU binding. Functionally, protease subunit of a proteasome-like degradation complex believed to be a general protein degrading machinery. The polypeptide is ATP-dependent protease subunit HslV (Amoebophilus asiaticus (strain 5a2)).